Here is a 305-residue protein sequence, read N- to C-terminus: UDP-3-O-acyl-N-acetylglucosamine deacetylase (305 aa).

Zn(2+) is bound by residues H79, H238, and D242. H265 (proton donor) is an active-site residue.

The protein belongs to the LpxC family. The cofactor is Zn(2+).

It carries out the reaction a UDP-3-O-[(3R)-3-hydroxyacyl]-N-acetyl-alpha-D-glucosamine + H2O = a UDP-3-O-[(3R)-3-hydroxyacyl]-alpha-D-glucosamine + acetate. Its pathway is glycolipid biosynthesis; lipid IV(A) biosynthesis; lipid IV(A) from (3R)-3-hydroxytetradecanoyl-[acyl-carrier-protein] and UDP-N-acetyl-alpha-D-glucosamine: step 2/6. Its function is as follows. Catalyzes the hydrolysis of UDP-3-O-myristoyl-N-acetylglucosamine to form UDP-3-O-myristoylglucosamine and acetate, the committed step in lipid A biosynthesis. The chain is UDP-3-O-acyl-N-acetylglucosamine deacetylase from Pectobacterium atrosepticum (strain SCRI 1043 / ATCC BAA-672) (Erwinia carotovora subsp. atroseptica).